We begin with the raw amino-acid sequence, 24 residues long: FLPLLAGLAANFLPTIICKISYKC.

C18 and C24 form a disulfide bridge.

The protein belongs to the frog skin active peptide (FSAP) family. Brevinin subfamily. Monomer. In terms of tissue distribution, expressed by the skin glands.

It localises to the secreted. In terms of biological role, has a non-hemolytic activity. Has a broad spectrum of activity against both Gram-positive and Gram-negative bacteria, fungi and protozoa. The protein is Gaegurin-6 (GGN6) of Glandirana rugosa (Japanese wrinkled frog).